A 488-amino-acid polypeptide reads, in one-letter code: Adenylosuccinate synthetase 1, chloroplastic (488 aa).

Residues 1-47 constitute a chloroplast transit peptide; it reads MSLSTVNHAAAAAAAAAGPGKSFSAAAPAAPSVRLPRTRAPAAAAVS. GTP is bound by residues 75–81 and 103–105; these read GDEGKGK and GHT. Asp-76 serves as the catalytic Proton acceptor. Residues Asp-76 and Gly-103 each coordinate Mg(2+). IMP contacts are provided by residues 76 to 79, 101 to 104, Thr-193, Arg-207, Gln-287, Thr-302, and Arg-366; these read DEGK and NAGH. The active-site Proton donor is His-104. Residue 362–368 participates in substrate binding; the sequence is TTTGRPR. Residues Arg-368, 394–396, and 477–479 each bind GTP; these read KLD and GVG.

The protein belongs to the adenylosuccinate synthetase family. In terms of assembly, homodimer. It depends on Mg(2+) as a cofactor.

The protein localises to the plastid. It localises to the chloroplast. It catalyses the reaction IMP + L-aspartate + GTP = N(6)-(1,2-dicarboxyethyl)-AMP + GDP + phosphate + 2 H(+). Its pathway is purine metabolism; AMP biosynthesis via de novo pathway; AMP from IMP: step 1/2. Plays an important role in the de novo pathway and in the salvage pathway of purine nucleotide biosynthesis. Catalyzes the first committed step in the biosynthesis of AMP from IMP. The protein is Adenylosuccinate synthetase 1, chloroplastic of Oryza sativa subsp. japonica (Rice).